A 53-amino-acid polypeptide reads, in one-letter code: MKFFTVLFFLLSIIYLIVAAPGEPGAPIDYDEYGDSSEEVGGTPLHEIPGIRL.

The signal sequence occupies residues 1–21; that stretch reads MKFFTVLFFLLSIIYLIVAAP.

In terms of tissue distribution, expressed at high levels in salivary glands and midguts of adult tsetse flies.

The protein localises to the secreted. In terms of biological role, potent and specific inhibitor of human thrombin. It is also a potent inhibitor of thrombin-induced platelet aggregation. It is capable of antagonizing host hemostasis and facilitating blood feeding. This is Tsetse thrombin inhibitor (TTI) from Glossina morsitans morsitans (Savannah tsetse fly).